The chain runs to 242 residues: UPF0273 protein MJ1359 (242 aa).

In terms of domain architecture, KaiC spans 2 to 242 (KRVKTGIPGM…VYPDKVLKLR (241 aa)). Residue 29-36 (GGPGTGKS) participates in ATP binding.

The protein belongs to the UPF0273 family.

In Methanocaldococcus jannaschii (strain ATCC 43067 / DSM 2661 / JAL-1 / JCM 10045 / NBRC 100440) (Methanococcus jannaschii), this protein is UPF0273 protein MJ1359.